Consider the following 311-residue polypeptide: Aspartate carbamoyltransferase catalytic subunit (311 aa).

Carbamoyl phosphate contacts are provided by R58 and T59. L-aspartate is bound at residue K86. Carbamoyl phosphate contacts are provided by R108, H136, and Q139. L-aspartate-binding residues include R169 and R223. Carbamoyl phosphate is bound by residues G264 and P265.

Belongs to the aspartate/ornithine carbamoyltransferase superfamily. ATCase family. Heterododecamer (2C3:3R2) of six catalytic PyrB chains organized as two trimers (C3), and six regulatory PyrI chains organized as three dimers (R2).

The enzyme catalyses carbamoyl phosphate + L-aspartate = N-carbamoyl-L-aspartate + phosphate + H(+). The protein operates within pyrimidine metabolism; UMP biosynthesis via de novo pathway; (S)-dihydroorotate from bicarbonate: step 2/3. Catalyzes the condensation of carbamoyl phosphate and aspartate to form carbamoyl aspartate and inorganic phosphate, the committed step in the de novo pyrimidine nucleotide biosynthesis pathway. The polypeptide is Aspartate carbamoyltransferase catalytic subunit (Desulfosudis oleivorans (strain DSM 6200 / JCM 39069 / Hxd3) (Desulfococcus oleovorans)).